Consider the following 745-residue polypeptide: MFTKYSHHNGYQDGSHLQPFQYQQQTYNQQSYLRQQQQAPQQISYGFNQPNSPTSSSSTPSSSTAMGNSFQNQRQINLQQQQQQEQFLQEQVFYQQQLLQQQSQIKEQQRQKEQKQKTNILNIYKEGKQKIMMSFYNLYRNYPTEPPHFSPSPIWLMGRCYTSKDNNSNNNSNNNQVPQTQPTQLQQSIGIFQNNNSNSNNNNNHNNNHNNNNNNLTTDLIYRPAIESGFLSDVASMIWFSYRKDFPPIENTNITTDIGWGCMLRTGQMILARALIKHLYKENDMVPEIERKKPHSNYSQVLAWFSDYPSKEHVYGIHQIVNKKQAMEKNNRKQQILREQVISLNRGGGGSSKGKKKKEKEEEINDNVEEWLAPTRISNILRQLIKFQHLEDLEMYVPTDGVIYKDYINNLCNNSNTHNHYQIIQQQLQHLREQQNIQQNNNKNNNNNNPTTTTTTTTTATSSNNNNNQSPPSRVPNGYNNQVFDDESLFDYNTAISSIPPKWKSLIIMIPLKLGADKLNSTYIEKLKLLLKLPQSLGFIGGKPKQSFYFIGFQDDQVIYLDPHFVQESVNPNSFDYSNTYSGCIPQKMPFTQLDPSLSIGFYCRDQASFEDLCDRLSVINNCEFPIISVCQKLPDYQIECELVDDYAESETTEMLAITIANGGNNHSCIPENIVVDDEEFIVHHHIPYNPNNNQNNNQNNNNNNNKNNNNNTNQQQTPNYPPKLNTYQPDFSSDGEIDDFTMVG.

Composition is skewed to low complexity over residues Gln29–Gln42, Ser52–Thr64, and Asn194–Asn215. Disordered regions lie at residues Gln29–Asn68 and Phe192–Asn215. The active-site Nucleophile is Cys262. Disordered regions lie at residues Leu344–Glu363 and Gln439–Asn480. A compositionally biased stretch (low complexity) spans Gln439–Asn477. Active-site residues include Asp562 and His564. Positions His686–Gly745 are disordered. The segment covering Pro688–Pro719 has biased composition (low complexity). Residues Ser734–Gly745 show a composition bias toward acidic residues.

The protein belongs to the peptidase C54 family.

It localises to the cytoplasm. It carries out the reaction [protein]-C-terminal L-amino acid-glycyl-phosphatidylethanolamide + H2O = [protein]-C-terminal L-amino acid-glycine + a 1,2-diacyl-sn-glycero-3-phosphoethanolamine. In terms of biological role, cysteine protease that plays a key role in autophagy by mediating both proteolytic activation and delipidation of ATG8 family proteins. The protease activity is required for proteolytic activation of ATG8 family proteins: cleaves the C-terminal amino acid of ATG8 proteins to reveal a C-terminal glycine. Exposure of the glycine at the C-terminus is essential for ATG8 proteins conjugation to phosphatidylethanolamine (PE) and insertion to membranes, which is necessary for autophagy. In addition to the protease activity, also mediates delipidation of PE-conjugated ATG8 proteins. The protein is Cysteine protease atg4 (atg4-1) of Dictyostelium discoideum (Social amoeba).